Consider the following 234-residue polypeptide: Opacity protein opA55 (234 aa).

Residue Ala1 is a signal peptide.

Belongs to the opacity porin family.

Its subcellular location is the cell outer membrane. Its function is as follows. Implicated in a number of adherence functions. OPA proteins are implicated in pathogenesis and are subject to phase variation. The chain is Opacity protein opA55 (opaE) from Neisseria gonorrhoeae.